Here is a 281-residue protein sequence, read N- to C-terminus: Ribosomal RNA small subunit methyltransferase A (281 aa).

The S-adenosyl-L-methionine site is built by Asn36, Leu38, Gly63, Glu84, Asp109, and Asn127.

The protein belongs to the class I-like SAM-binding methyltransferase superfamily. rRNA adenine N(6)-methyltransferase family. RsmA subfamily.

It is found in the cytoplasm. It catalyses the reaction adenosine(1518)/adenosine(1519) in 16S rRNA + 4 S-adenosyl-L-methionine = N(6)-dimethyladenosine(1518)/N(6)-dimethyladenosine(1519) in 16S rRNA + 4 S-adenosyl-L-homocysteine + 4 H(+). In terms of biological role, specifically dimethylates two adjacent adenosines (A1518 and A1519) in the loop of a conserved hairpin near the 3'-end of 16S rRNA in the 30S particle. May play a critical role in biogenesis of 30S subunits. This chain is Ribosomal RNA small subunit methyltransferase A, found in Borreliella burgdorferi (strain ATCC 35210 / DSM 4680 / CIP 102532 / B31) (Borrelia burgdorferi).